The chain runs to 117 residues: Large ribosomal subunit protein bL20 (117 aa).

Belongs to the bacterial ribosomal protein bL20 family.

Functionally, binds directly to 23S ribosomal RNA and is necessary for the in vitro assembly process of the 50S ribosomal subunit. It is not involved in the protein synthesizing functions of that subunit. This chain is Large ribosomal subunit protein bL20, found in Campylobacter lari (strain RM2100 / D67 / ATCC BAA-1060).